The following is a 360-amino-acid chain: Lipid-A-disaccharide synthase (360 aa).

Belongs to the LpxB family.

It catalyses the reaction a lipid X + a UDP-2-N,3-O-bis[(3R)-3-hydroxyacyl]-alpha-D-glucosamine = a lipid A disaccharide + UDP + H(+). It functions in the pathway bacterial outer membrane biogenesis; LPS lipid A biosynthesis. In terms of biological role, condensation of UDP-2,3-diacylglucosamine and 2,3-diacylglucosamine-1-phosphate to form lipid A disaccharide, a precursor of lipid A, a phosphorylated glycolipid that anchors the lipopolysaccharide to the outer membrane of the cell. This Helicobacter pylori (strain G27) protein is Lipid-A-disaccharide synthase.